A 177-amino-acid polypeptide reads, in one-letter code: NADH-quinone oxidoreductase subunit B (177 aa).

[4Fe-4S] cluster is bound by residues cysteine 56, cysteine 57, cysteine 121, and cysteine 151.

This sequence belongs to the complex I 20 kDa subunit family. NDH-1 is composed of 14 different subunits. Subunits NuoB, C, D, E, F, and G constitute the peripheral sector of the complex. The cofactor is [4Fe-4S] cluster.

The protein resides in the cell inner membrane. It catalyses the reaction a quinone + NADH + 5 H(+)(in) = a quinol + NAD(+) + 4 H(+)(out). Its function is as follows. NDH-1 shuttles electrons from NADH, via FMN and iron-sulfur (Fe-S) centers, to quinones in the respiratory chain. Couples the redox reaction to proton translocation (for every two electrons transferred, four hydrogen ions are translocated across the cytoplasmic membrane), and thus conserves the redox energy in a proton gradient. In Roseobacter denitrificans (strain ATCC 33942 / OCh 114) (Erythrobacter sp. (strain OCh 114)), this protein is NADH-quinone oxidoreductase subunit B.